A 382-amino-acid chain; its full sequence is ATP phosphoribosyltransferase regulatory subunit (382 aa).

Belongs to the class-II aminoacyl-tRNA synthetase family. HisZ subfamily. As to quaternary structure, heteromultimer composed of HisG and HisZ subunits.

It is found in the cytoplasm. Its pathway is amino-acid biosynthesis; L-histidine biosynthesis; L-histidine from 5-phospho-alpha-D-ribose 1-diphosphate: step 1/9. Functionally, required for the first step of histidine biosynthesis. May allow the feedback regulation of ATP phosphoribosyltransferase activity by histidine. This is ATP phosphoribosyltransferase regulatory subunit from Albidiferax ferrireducens (strain ATCC BAA-621 / DSM 15236 / T118) (Rhodoferax ferrireducens).